Consider the following 960-residue polypeptide: Chromo domain-containing protein 1 (960 aa).

Positions 22 to 74 (YEVEDILADRVNKNGINEYYIKWAGYDWYDNTWEPEQNLFGAEKVLKKWKKRK) constitute a Chromo domain.

As to quaternary structure, ago1, chp1 and tas3 interact to form the core of the RNA-induced transcriptional silencing (RITS) complex. The RITS complex interacts with the RDRC complex via interaction between ago1 and hrr1. Clr4 has a role in mediating this interaction. Interacts with dri1.

The protein localises to the nucleus. It is found in the cytoplasm. The protein resides in the cytoskeleton. It localises to the microtubule organizing center. Its subcellular location is the spindle pole body. Component of the kinetochore which plays a role in stabilizing microtubules and so allowing accurate chromosome segregation. Has a role in the RNA interference (RNAi) pathway which is important for heterochromatin formation and accurate chromosome segregation. A member of the RNA-induced transcriptional silencing (RITS) complex which is involved in the biosynthesis of dsRNA from primer siRNAs provided by the RNA-directed RNA polymerase (RDRC) complex. The sequence is that of Chromo domain-containing protein 1 from Schizosaccharomyces pombe (strain 972 / ATCC 24843) (Fission yeast).